Consider the following 275-residue polypeptide: Large ribosomal subunit protein uL2 (275 aa).

Residues 220–275 (QTRGAAMNPVDHPHGGGEGKTGSSGHPVSPWGMPAKGFKTRKKKASDKLIISRRKK) are disordered. Over residues 257–275 (FKTRKKKASDKLIISRRKK) the composition is skewed to basic residues.

Belongs to the universal ribosomal protein uL2 family. Part of the 50S ribosomal subunit. Forms a bridge to the 30S subunit in the 70S ribosome.

One of the primary rRNA binding proteins. Required for association of the 30S and 50S subunits to form the 70S ribosome, for tRNA binding and peptide bond formation. It has been suggested to have peptidyltransferase activity; this is somewhat controversial. Makes several contacts with the 16S rRNA in the 70S ribosome. The polypeptide is Large ribosomal subunit protein uL2 (Wolinella succinogenes (strain ATCC 29543 / DSM 1740 / CCUG 13145 / JCM 31913 / LMG 7466 / NCTC 11488 / FDC 602W) (Vibrio succinogenes)).